Here is a 377-residue protein sequence, read N- to C-terminus: DNA dC-&gt;dU-editing enzyme APOBEC-3G (377 aa).

Residues 1-60 (MNPQIRNMVEQMEPDIFVYYFNNRPILSGRNTVWLCYEVKTKDPSGPPLDANIFQGKLYP) form an essential for cytoplasmic localization region. CMP/dCMP-type deaminase domains lie at 29-138 (GRNT…LRIL) and 214-327 (GQRE…LRTL). Thr32 is subject to Phosphothreonine; by PKA. Zn(2+) contacts are provided by His65, Cys97, and Cys100. The necessary for homooligomerization stretch occupies residues 209–335 (KPWVSGQRET…TLHRDGAKIA (127 aa)). Residues 213-215 (SGQ) are interaction with DNA. At Thr218 the chain carries Phosphothreonine; by PKA and CAMK2. His257 lines the Zn(2+) pocket. The active-site Proton donor is Glu259. Zn(2+)-binding residues include Cys287 and Cys290. Positions 312 to 319 (RIYDDQGR) are interaction with DNA.

The protein belongs to the cytidine and deoxycytidylate deaminase family. As to quaternary structure, homodimer. Homooligomer. Can bind RNA to form ribonucleoprotein complexes of high-molecular-mass (HMM) or low-molecular-mass (LMM). HMM is inactive and heterogeneous in protein composition because of binding nonselectively to cellular RNAs, which in turn are associated with variety of cellular proteins. The LMM form which is enzymatically active has few or no RNAs associated. Its ability to form homooligomer is distinct from its ability to assemble into HMM. Interacts with APOBEC3B, APOBEC3F, MOV10, AGO2, EIF4E, EIF4ENIF1, DCP2 and DDX6 in an RNA-dependent manner. Interacts with AGO1, AGO3 and PKA/PRKACA. Zn(2+) is required as a cofactor.

The protein localises to the cytoplasm. It localises to the nucleus. Its subcellular location is the P-body. The enzyme catalyses a 2'-deoxycytidine in single-stranded DNA + H2O + H(+) = a 2'-deoxyuridine in single-stranded DNA + NH4(+). In terms of biological role, DNA deaminase (cytidine deaminase) which acts as an inhibitor of retrovirus replication and retrotransposon mobility via deaminase-dependent and -independent mechanisms. Exhibits antiviral activity against vif-deficient: HIV-1 and simian immunodeficiency viruses (SIVs) and also simian foamy virus (SFV). After the penetration of retroviral nucleocapsids into target cells of infection and the initiation of reverse transcription, it can induce the conversion of cytosine to uracil in the minus-sense single-strand viral DNA, leading to G-to-A hypermutations in the subsequent plus-strand viral DNA. The resultant detrimental levels of mutations in the proviral genome, along with a deamination-independent mechanism that works prior to the proviral integration, together exert efficient antiretroviral effects in infected target cells. Selectively targets single-stranded DNA and does not deaminate double-stranded DNA or single- or double-stranded RNA. May inhibit the mobility of LTR retrotransposons. The protein is DNA dC-&gt;dU-editing enzyme APOBEC-3G (APOBEC3G) of Chlorocebus aethiops (Green monkey).